Consider the following 366-residue polypeptide: MREDTGDFRRLFLSGTPMMDVRAPLEFARGAFPGTVNLPLMDDEERHQVGLCYAEKGQHAAIELGHRLVWGALKATRIAQWADFARAHPDGYLYCFRGGLRSQIVQQWLRDEAGIDYPRVTGGYKAMRGFLIDVIEQAAAKQDFLVLGGLTGTGKTDVIAEVPAAVDLEGLACHRGSAFGRRAQPQPQQIDFENSLAIDVLQRAEAGYRALVVEDEGRFIGGRDLPKVLWQRMQASPMVWLEASFEERVERVLRDYVLGLAAEHIEQLGPVAGFEAYATRLRDAMAAISPRLGSERYGRLSALLEQALTSQSERGETAPHRAWIEVLLRDYYDPMYAYQEEKRAARVVFRGDRAAVTDWLRERSAR.

The region spanning 12-136 (FLSGTPMMDV…MRGFLIDVIE (125 aa)) is the Rhodanese domain. Cys95 functions as the S-selanylcysteine intermediate in the catalytic mechanism.

Belongs to the SelU family. Monomer.

It carries out the reaction 5-methylaminomethyl-2-thiouridine(34) in tRNA + selenophosphate + (2E)-geranyl diphosphate + H2O + H(+) = 5-methylaminomethyl-2-selenouridine(34) in tRNA + (2E)-thiogeraniol + phosphate + diphosphate. The catalysed reaction is 5-methylaminomethyl-2-thiouridine(34) in tRNA + (2E)-geranyl diphosphate = 5-methylaminomethyl-S-(2E)-geranyl-thiouridine(34) in tRNA + diphosphate. The enzyme catalyses 5-methylaminomethyl-S-(2E)-geranyl-thiouridine(34) in tRNA + selenophosphate + H(+) = 5-methylaminomethyl-2-(Se-phospho)selenouridine(34) in tRNA + (2E)-thiogeraniol. It catalyses the reaction 5-methylaminomethyl-2-(Se-phospho)selenouridine(34) in tRNA + H2O = 5-methylaminomethyl-2-selenouridine(34) in tRNA + phosphate. In terms of biological role, involved in the post-transcriptional modification of the uridine at the wobble position (U34) of tRNA(Lys), tRNA(Glu) and tRNA(Gln). Catalyzes the conversion of 2-thiouridine (S2U-RNA) to 2-selenouridine (Se2U-RNA). Acts in a two-step process involving geranylation of 2-thiouridine (S2U) to S-geranyl-2-thiouridine (geS2U) and subsequent selenation of the latter derivative to 2-selenouridine (Se2U) in the tRNA chain. The chain is tRNA 2-selenouridine synthase from Cupriavidus pinatubonensis (strain JMP 134 / LMG 1197) (Cupriavidus necator (strain JMP 134)).